The sequence spans 205 residues: Rho-related GTP-binding protein RhoQ (205 aa).

16 to 23 (GDGAVGKT) contributes to the GTP binding site. The short motif at 38-46 (YVPTVFDHY) is the Effector region element. Residues 63 to 67 (DTAGQ) and 121 to 124 (TQID) contribute to the GTP site. The residue at position 202 (Cys202) is a Cysteine methyl ester. The S-farnesyl cysteine moiety is linked to residue Cys202. Positions 203 to 205 (LIT) are cleaved as a propeptide — removed in mature form.

This sequence belongs to the small GTPase superfamily. Rho family. As to quaternary structure, interacts with EXO70, CDC42EP1, CDC42EP2 and CDC42EP3 in a GTP-dependent manner. Interacts with CDC42EP4, PARD6A, PARD6G (and probably PARD6B) in a GTP-dependent manner. Part of a quaternary complex containing PARD3, some PARD6 protein (PARD6A, PARD6B or PARD6G) and some atypical PKC protein (PRKCI or PRKCZ). Interacts with GOPC. Interacts with ARHGAP33/TCGAP. In terms of processing, may be post-translationally modified by both palmitoylation and polyisoprenylation.

The protein resides in the cytoplasm. It is found in the cell membrane. With respect to regulation, regulated by guanine nucleotide exchange factors (GEFs) which promote the exchange of bound GDP for free GTP, GTPase activating proteins (GAPs) which increase the GTP hydrolysis activity, and GDP dissociation inhibitors which inhibit the dissociation of the nucleotide from the GTPase. Functionally, plasma membrane-associated small GTPase which cycles between an active GTP-bound and an inactive GDP-bound state. In active state binds to a variety of effector proteins to regulate cellular responses. Involved in epithelial cell polarization processes. May play a role in CFTR trafficking to the plasma membrane. Causes the formation of thin, actin-rich surface projections called filopodia. This Mus musculus (Mouse) protein is Rho-related GTP-binding protein RhoQ (Rhoq).